A 741-amino-acid chain; its full sequence is Catalase-peroxidase (741 aa).

Residues 1–21 form the signal peptide; sequence MRNFRRFTIALLVLFLGPIGA. Residues 109–231 constitute a cross-link (tryptophyl-tyrosyl-methioninium (Trp-Tyr) (with M-257)); the sequence is WHSAGTYRIS…LAAVQMGLIY (123 aa). The Proton acceptor role is filled by His-110. The segment at residues 231–257 is a cross-link (tryptophyl-tyrosyl-methioninium (Tyr-Met) (with W-109)); it reads YVNPEGPNGNPDPLAAAKDIRETFGRM. Heme b is bound at residue His-272.

Belongs to the peroxidase family. Peroxidase/catalase subfamily. As to quaternary structure, homodimer or homotetramer. The cofactor is heme b. Post-translationally, formation of the three residue Trp-Tyr-Met cross-link is important for the catalase, but not the peroxidase activity of the enzyme.

The catalysed reaction is H2O2 + AH2 = A + 2 H2O. It carries out the reaction 2 H2O2 = O2 + 2 H2O. Its function is as follows. Bifunctional enzyme with both catalase and broad-spectrum peroxidase activity. The chain is Catalase-peroxidase from Leptospira biflexa serovar Patoc (strain Patoc 1 / Ames).